Here is a 160-residue protein sequence, read N- to C-terminus: Major strawberry allergen Fra a 1-E (160 aa).

It belongs to the BetVI family. As to quaternary structure, monomer. Interacts with AP. As to expression, highly expressed in roots. Expressed in open flowers. Expressed at low levels in leaves, flower buds and fruits.

In terms of biological role, involved in the control of flavonoid biosynthesis in fruits, probably by binding directly to natural flavonoids. Binds the natural flavonoid quercetin-3-O-glucuronide with affinities in the low micromolar range. In Fragaria ananassa (Strawberry), this protein is Major strawberry allergen Fra a 1-E.